Here is a 231-residue protein sequence, read N- to C-terminus: 7-cyano-7-deazaguanine synthase (231 aa).

8-18 (FSGGQDSTTCL) is an ATP binding site. The Zn(2+) site is built by C188, C197, C200, and C203.

It belongs to the QueC family. Zn(2+) is required as a cofactor.

The enzyme catalyses 7-carboxy-7-deazaguanine + NH4(+) + ATP = 7-cyano-7-deazaguanine + ADP + phosphate + H2O + H(+). It participates in purine metabolism; 7-cyano-7-deazaguanine biosynthesis. In terms of biological role, catalyzes the ATP-dependent conversion of 7-carboxy-7-deazaguanine (CDG) to 7-cyano-7-deazaguanine (preQ(0)). This Escherichia coli (strain ATCC 8739 / DSM 1576 / NBRC 3972 / NCIMB 8545 / WDCM 00012 / Crooks) protein is 7-cyano-7-deazaguanine synthase.